A 232-amino-acid polypeptide reads, in one-letter code: NAD(P)H-quinone oxidoreductase subunit K 1 (232 aa).

Cys49, Cys50, Cys114, and Cys145 together coordinate [4Fe-4S] cluster.

The protein belongs to the complex I 20 kDa subunit family. As to quaternary structure, NDH-1 can be composed of about 15 different subunits; different subcomplexes with different compositions have been identified which probably have different functions. [4Fe-4S] cluster is required as a cofactor.

Its subcellular location is the cell inner membrane. The catalysed reaction is a plastoquinone + NADH + (n+1) H(+)(in) = a plastoquinol + NAD(+) + n H(+)(out). It carries out the reaction a plastoquinone + NADPH + (n+1) H(+)(in) = a plastoquinol + NADP(+) + n H(+)(out). NDH-1 shuttles electrons from an unknown electron donor, via FMN and iron-sulfur (Fe-S) centers, to quinones in the respiratory and/or the photosynthetic chain. The immediate electron acceptor for the enzyme in this species is believed to be plastoquinone. Couples the redox reaction to proton translocation, and thus conserves the redox energy in a proton gradient. Cyanobacterial NDH-1 also plays a role in inorganic carbon-concentration. This chain is NAD(P)H-quinone oxidoreductase subunit K 1, found in Gloeobacter violaceus (strain ATCC 29082 / PCC 7421).